Consider the following 358-residue polypeptide: Uroporphyrinogen decarboxylase (358 aa).

Residues 29-33 (RQAGR), Phe-48, Asp-79, Tyr-155, Ser-210, and His-330 contribute to the substrate site.

The protein belongs to the uroporphyrinogen decarboxylase family. Homodimer.

The protein localises to the cytoplasm. It carries out the reaction uroporphyrinogen III + 4 H(+) = coproporphyrinogen III + 4 CO2. Its pathway is porphyrin-containing compound metabolism; protoporphyrin-IX biosynthesis; coproporphyrinogen-III from 5-aminolevulinate: step 4/4. In terms of biological role, catalyzes the decarboxylation of four acetate groups of uroporphyrinogen-III to yield coproporphyrinogen-III. This is Uroporphyrinogen decarboxylase from Bordetella bronchiseptica (strain ATCC BAA-588 / NCTC 13252 / RB50) (Alcaligenes bronchisepticus).